We begin with the raw amino-acid sequence, 721 residues long: Mitogen-activated protein kinase 6 (721 aa).

Met1 is covalently cross-linked (Peptide (Met-Gly) (interchain with G-Cter in ubiquitin)). The 297-residue stretch at 20–316 folds into the Protein kinase domain; sequence YMDLKPLGCG…AEEALSHPYM (297 aa). ATP-binding positions include 26 to 34 and Lys49; that span reads LGCGGNGLV. Asp152 acts as the Proton acceptor in catalysis. Phosphoserine; by PAK1, PAK2 and PAK3 is present on Ser189. The SEG motif signature appears at 189–191; the sequence is SEG. Positions 332–337 match the FRIEDE motif motif; that stretch reads FHIEDE. 6 positions are modified to phosphoserine: Ser386, Ser452, Ser556, Ser558, Ser665, and Ser684. Residues 701–715 are compositionally biased toward polar residues; it reads AMKSSPQIPHQTYSS. The disordered stretch occupies residues 701-721; it reads AMKSSPQIPHQTYSSILKHLN.

It belongs to the protein kinase superfamily. CMGC Ser/Thr protein kinase family. MAP kinase subfamily. Heterodimer with ERK4/MAPK4. Interacts with (via FRIEDE motif) MAPKAPK5. Interacts with UBE3A; this interaction may be indirect and mediated by HERC2, possibly via HERC2 interaction with NEURL4. The cofactor is Mg(2+). Phosphorylated at Ser-189 by PAK1, PAK2 and PAK3 resulting in catalytic activation. Phosphorylated by MAPKAPK5 at other sites. Post-translationally, ubiquitination at Met-1 leads to degradation by the proteasome pathway.

It localises to the cytoplasm. It is found in the nucleus. The catalysed reaction is L-seryl-[protein] + ATP = O-phospho-L-seryl-[protein] + ADP + H(+). The enzyme catalyses L-threonyl-[protein] + ATP = O-phospho-L-threonyl-[protein] + ADP + H(+). Its activity is regulated as follows. Activated by phosphorylation at Ser-189. Functionally, atypical MAPK protein. Phosphorylates microtubule-associated protein 2 (MAP2) and MAPKAPK5. The precise role of the complex formed with MAPKAPK5 is still unclear, but the complex follows a complex set of phosphorylation events: upon interaction with atypical MAPKAPK5, ERK3/MAPK6 is phosphorylated at Ser-189 and then mediates phosphorylation and activation of MAPKAPK5, which in turn phosphorylates ERK3/MAPK6. May promote entry in the cell cycle. This is Mitogen-activated protein kinase 6 (MAPK6) from Pongo abelii (Sumatran orangutan).